The following is a 767-amino-acid chain: Dipeptidyl peptidase 4 (767 aa).

Over 1-6 (MKTPWK) the chain is Cytoplasmic. The helical; Signal-anchor for type II membrane protein transmembrane segment at 7 to 28 (VLLGLLGVAALVTIITVPVVLL) threads the bilayer. Residues 29-767 (NKDEAAADSR…HFLQQCFSLR (739 aa)) lie on the Extracellular side of the membrane. N-linked (GlcNAc...) asparagine glycans are attached at residues asparagine 83, asparagine 90, asparagine 148, asparagine 217, asparagine 227, and asparagine 319. Cystine bridges form between cysteine 326–cysteine 337, cysteine 383–cysteine 395, cysteine 445–cysteine 448, and cysteine 455–cysteine 473. N-linked (GlcNAc...) asparagine glycosylation occurs at asparagine 521. Serine 631 functions as the Charge relay system in the catalytic mechanism. Cysteine 650 and cysteine 763 are disulfide-bonded. Asparagine 686 carries N-linked (GlcNAc...) asparagine glycosylation. Catalysis depends on charge relay system residues aspartate 709 and histidine 741.

This sequence belongs to the peptidase S9B family. DPPIV subfamily. Monomer. Homodimer. Heterodimer with Seprase (FAP). Requires homodimerization for optimal dipeptidyl peptidase activity and T-cell costimulation. Found in a membrane raft complex, at least composed of BCL10, CARD11, DPP4 and IKBKB. Associates with collagen. Interacts with PTPRC; the interaction is enhanced in an interleukin-12-dependent manner in activated lymphocytes. Interacts (via extracellular domain) with ADA; does not inhibit its dipeptidyl peptidase activity. Interacts with CAV1 (via the N-terminus); the interaction is direct. Interacts (via cytoplasmic tail) with CARD11 (via PDZ domain); its homodimerization is necessary for interaction with CARD11. Interacts with IGF2R; the interaction is direct. Interacts with GPC3. The soluble form (Dipeptidyl peptidase 4 soluble form also named SDPP) derives from the membrane form (Dipeptidyl peptidase 4 membrane form also named MDPP) by proteolytic processing. Post-translationally, N- and O-Glycosylated. In terms of processing, phosphorylated. Mannose 6-phosphate residues in the carbohydrate moiety are necessary for interaction with IGF2R in activated T-cells. Mannose 6-phosphorylation is induced during T-cell activation. Expressed in bile ducts and other epithelial brush borders (small intestine, kidney, colon, pancreatic duct); acinar structures in salivary glands; endothelial structures and T cell areas in thymus, spleen and lymph node.

The protein resides in the secreted. Its subcellular location is the cell membrane. It is found in the apical cell membrane. It localises to the cell projection. The protein localises to the invadopodium membrane. The protein resides in the lamellipodium membrane. Its subcellular location is the cell junction. It is found in the membrane raft. It carries out the reaction Release of an N-terminal dipeptide, Xaa-Yaa-|-Zaa-, from a polypeptide, preferentially when Yaa is Pro, provided Zaa is neither Pro nor hydroxyproline.. With respect to regulation, inhibited by GPC3 and diprotin A. Cell surface glycoprotein receptor involved in the costimulatory signal essential for T-cell receptor (TCR)-mediated T-cell activation. Acts as a positive regulator of T-cell coactivation, by binding at least ADA, CAV1, IGF2R, and PTPRC. Its binding to CAV1 and CARD11 induces T-cell proliferation and NF-kappa-B activation in a T-cell receptor/CD3-dependent manner. Its interaction with ADA also regulates lymphocyte-epithelial cell adhesion. In association with FAP is involved in the pericellular proteolysis of the extracellular matrix (ECM), the migration and invasion of endothelial cells into the ECM. May be involved in the promotion of lymphatic endothelial cells adhesion, migration and tube formation. When overexpressed, enhanced cell proliferation, a process inhibited by GPC3. Also acts as a serine exopeptidase with a dipeptidyl peptidase activity that regulates various physiological processes by cleaving peptides in the circulation, including many chemokines, mitogenic growth factors, neuropeptides and peptide hormones. Removes N-terminal dipeptides sequentially from polypeptides having unsubstituted N-termini provided that the penultimate residue is proline. This is Dipeptidyl peptidase 4 (Dpp4) from Rattus norvegicus (Rat).